The following is a 372-amino-acid chain: GDP-mannose 4,6-dehydratase (372 aa).

NADP(+) contacts are provided by residues 8–13 (GITGQD), 63–64 (DL), 85–89 (LGAQS), and tyrosine 100. Threonine 132 is a catalytic residue. Active-site nucleophile residues include glutamate 134 and tyrosine 156. Lysine 160, histidine 186, and arginine 191 together coordinate NADP(+).

It belongs to the NAD(P)-dependent epimerase/dehydratase family. GDP-mannose 4,6-dehydratase subfamily. It depends on NADP(+) as a cofactor.

The enzyme catalyses GDP-alpha-D-mannose = GDP-4-dehydro-alpha-D-rhamnose + H2O. It functions in the pathway bacterial outer membrane biogenesis; LPS O-antigen biosynthesis. The protein operates within nucleotide-sugar biosynthesis; GDP-L-fucose biosynthesis via de novo pathway; GDP-L-fucose from GDP-alpha-D-mannose: step 1/2. Catalyzes the conversion of GDP-D-mannose to GDP-4-dehydro-6-deoxy-D-mannose. The polypeptide is GDP-mannose 4,6-dehydratase (Yersinia enterocolitica serotype O:8 / biotype 1B (strain NCTC 13174 / 8081)).